Here is a 591-residue protein sequence, read N- to C-terminus: CTP synthase 1-A (591 aa).

Residues 300-554 form the Glutamine amidotransferase type-1 domain; that stretch reads SIALVGKYTK…LASVGRLSQY (255 aa). Residues Cys-399, His-526, and Glu-528 each act as for GATase activity in the active site.

The protein belongs to the CTP synthase family.

The enzyme catalyses UTP + L-glutamine + ATP + H2O = CTP + L-glutamate + ADP + phosphate + 2 H(+). It participates in pyrimidine metabolism; CTP biosynthesis via de novo pathway; CTP from UDP: step 2/2. This enzyme is involved in the de novo synthesis of CTP, a precursor of DNA, RNA and phospholipids. Catalyzes the ATP-dependent amination of UTP to CTP with either L-glutamine or ammonia as a source of nitrogen. This is CTP synthase 1-A (ctps1-a) from Xenopus laevis (African clawed frog).